The sequence spans 640 residues: Asparagine synthetase domain-containing protein 1 (640 aa).

Residue Cys-2 is the For GATase activity of the active site. The 183-residue stretch at 2–184 (CGICCAVSFS…ASGIFRIDLK (183 aa)) folds into the Glutamine amidotransferase type-2 domain. One can recognise an Asparagine synthetase domain in the interval 286–602 (QFIGVLSTAV…GLTASALLPK (317 aa)).

This is Asparagine synthetase domain-containing protein 1 (ASNSD1) from Bos taurus (Bovine).